The following is a 1009-amino-acid chain: Protein WBSCR14 homolog (1009 aa).

Disordered stretches follow at residues 1 to 20 (MSRG…PHDD), 304 to 354 (MSLG…LHQM), 488 to 531 (NNQP…DPMM), and 686 to 728 (ILES…EQEA). Polar residues-rich tracts occupy residues 324-350 (RTPT…SSAS) and 499-508 (RSNLLPTQND). A compositionally biased stretch (low complexity) spans 511 to 526 (LPQFLQSTQPTPQPQS). Residues 686-695 (ILESPSTSGD) are compositionally biased toward polar residues. The 54-residue stretch at 803-856 (RKRILHLHAEQNRRSALKDGFDQLMDIIPDLYSGGVKPTNAVVLAKSADHIRRL) folds into the bHLH domain. Residues 856–877 (LQAEKWDKTQKIDEAKAKIEKL) form a leucine-zipper region.

As to expression, expressed in intestine, neurons, muscle, hypodermis, excretory cell and other tissues.

The protein localises to the nucleus. It is found in the cytoplasm. Its subcellular location is the mitochondrion. Transcription factor that binds to the E box motif 5'-CACGTG-3', probably in a heterodimeric complex with mxl-2. Involved in modulating longevity in response to TOR signaling, dietary restriction, the decline in protein homeostasis associated with normal aging, germline signaling and the insulin-like signaling pathway. Plays a role in autophagy. Involved in regulating migration of the ray 1 precursor cells in the male tail, acting in concert with Wnt and semaphorin signaling pathways. Regulates transcription of genes encoding extracellular matrix (ECM) components which may contribute to the substratum required for migration of the neighboring ray 1 precursor cells. Involved in repressing infection by the microsporidian pathogen N.parisii, probably acting independently of its canonical partner, mxl-2. The sequence is that of Protein WBSCR14 homolog (mml-1) from Caenorhabditis elegans.